The following is a 928-amino-acid chain: DNA polymerase I (928 aa).

The 5'-3' exonuclease domain maps to 1 to 323 (MVQIPQNPLI…ADEAPEVTAT (323 aa)). The 3'-5' exonuclease domain occupies 324 to 517 (VISYDNYVTI…LHLKMWPDLQ (194 aa)). The segment at 324–928 (VISYDNYVTI…GSGENWDQAH (605 aa)) is klenow fragment. The segment at 521–928 (GPLNVFENIE…GSGENWDQAH (408 aa)) is polymerase.

The protein belongs to the DNA polymerase type-A family. In terms of assembly, single-chain monomer with multiple functions.

It carries out the reaction DNA(n) + a 2'-deoxyribonucleoside 5'-triphosphate = DNA(n+1) + diphosphate. Its function is as follows. In addition to polymerase activity, this DNA polymerase exhibits 3'-5' and 5'-3' exonuclease activity. It is able to utilize nicked circular duplex DNA as a template and can unwind the parental DNA strand from its template. Genetic interactions among priB, dam, lexA, nagC, polA, rdgB, rdgB, rep and uup link the PriA-PriB replication restart pathway to DNA double-strand break repair. The polypeptide is DNA polymerase I (polA) (Escherichia coli (strain K12)).